A 139-amino-acid chain; its full sequence is uncharacterized protein (139 aa).

The tract at residues 1 to 116 (MYNPWQVGAS…TRPRVVARGK (116 aa)) is disordered. 2 stretches are compositionally biased toward low complexity: residues 50 to 70 (RPRP…GPRP) and 84 to 110 (LPAY…TRPR).

This is an uncharacterized protein from Homo sapiens (Human).